The primary structure comprises 350 residues: Phenylalanine--tRNA ligase alpha subunit (350 aa).

E257 serves as a coordination point for Mg(2+).

This sequence belongs to the class-II aminoacyl-tRNA synthetase family. Phe-tRNA synthetase alpha subunit type 1 subfamily. Tetramer of two alpha and two beta subunits. Mg(2+) serves as cofactor.

The protein localises to the cytoplasm. The catalysed reaction is tRNA(Phe) + L-phenylalanine + ATP = L-phenylalanyl-tRNA(Phe) + AMP + diphosphate + H(+). The protein is Phenylalanine--tRNA ligase alpha subunit of Listeria monocytogenes serotype 4b (strain CLIP80459).